A 436-amino-acid polypeptide reads, in one-letter code: MIIPWQKSTLYKHKTSIECLLNYSFMPGTPETALDNLALVHTYAALTSTSTCKICQTLYSLISKNTPAVSFYEDYSLLCLTCLYAPITWTSTLMTAADFIEIIKTHFPTSDTSNFYAPQSLLAIDIQLHFYIHRCFKVLSSNDILSTSSLQFLKTTFLQGKLTGSIPGQFCFKTAWIKNDTCCNNTSHDLPSNLSSVFCKADLQLKPNLLPIILDIWSASDLFKNNVSNSEQPFFTYPEDIDICQGPCLLSPSLGLTQKNNTTSICPLCECIASHPNAIDTLQTLKYTIINCIENNVKLLDRISFILSNDELDFIQDPILKTVIQNCSIQEIHKHFFCDPQCALNIKKTSTNILFKIPDPNLLKVLCARLATGEHLSKNYYLDCEYLETLALIFKCSQTCKVGKTTFLEIIRELDLLSKKHNIPTVKAFQTSQIYA.

Zn(2+) contacts are provided by C52, C55, H129, C135, C182, C183, C266, C269, H335, C342, C384, and H421. 3 zinc finger regions span residues C52 to C135, C182 to H421, and C266 to C342.

Belongs to the herpesviridae UL32 protein family.

It localises to the host cytoplasm. The protein localises to the host nucleus. In terms of biological role, plays a role in efficient localization of neo-synthesized capsids to nuclear replication compartments, thereby controlling cleavage and packaging of virus genomic DNA. This Saimiriine herpesvirus 2 (strain 11) (SaHV-2) protein is Packaging protein UL32 (68).